The following is a 1347-amino-acid chain: Protocadherin-11 X-linked (1347 aa).

An N-terminal signal peptide occupies residues 1-23 (MDLLSGTYIFAVLLACVVFHSGA). Over 24–812 (QEKNYTIREE…VSSPTSDYVK (789 aa)) the chain is Extracellular. Cadherin domains lie at 26-139 (KNYT…APLF), 140-249 (PATV…HPVF), 250-355 (KETE…VPSI), 362-466 (NPVN…APVF), 467-570 (TQSF…SPVF), 571-673 (THNE…KPVF), and 677-795 (PSNC…APVT). 3 N-linked (GlcNAc...) asparagine glycosylation sites follow: N27, N48, and N54. A glycan (N-linked (GlcNAc...) asparagine) is linked at N344. Residue N553 is glycosylated (N-linked (GlcNAc...) asparagine). Residue N773 is glycosylated (N-linked (GlcNAc...) asparagine). The chain crosses the membrane as a helical span at residues 813–833 (ILVAAVAGTITVVVVIFITAV). Residues 834–1347 (VRCRQAPHLK…DSPIMEEHPL (514 aa)) are Cytoplasmic-facing. 3 disordered regions span residues 1057-1091 (LPEGSQESSSDGGLGDHDAGSLTSTSHGLPLGYPQ), 1097-1116 (RATPSNRTEGDGNSDPESTF), and 1326-1347 (FTPRQQARPSRGDSPIMEEHPL).

In terms of tissue distribution, expressed strongly in fetal brain and brain (cortex, amygdala, thalamus, substantia nigra, hippocampus, caudate nucleus and corpus callosum). Expressed at low level in testis.

Its subcellular location is the cell membrane. In terms of biological role, potential calcium-dependent cell-adhesion protein. This chain is Protocadherin-11 X-linked (PCDH11X), found in Homo sapiens (Human).